Consider the following 1347-residue polypeptide: Probable serine/threonine-protein kinase DDB_G0288147 (1347 aa).

The Phorbol-ester/DAG-type zinc finger occupies 12–67; the sequence is NHRFEPYTLKHLTICKRCEKEIIGVSNSAQICYSCKNIYHTRCCKEIETKKLELIC. Disordered regions lie at residues 262–316, 333–402, and 463–485; these read PFNE…LNES, SNNS…KSSK, and DNNN…NNNN. Residues 271–282 show a composition bias toward polar residues; sequence DSTLSASTYNRR. Low complexity-rich tracts occupy residues 286–316, 333–342, and 350–361; these read KNKN…LNES, SNNSNNLAAL, and TTTTTTTTTTTT. Basic residues-rich tracts occupy residues 366-382 and 389-402; these read NNHH…KSRK and NKKK…KSSK. Residues 464–485 are compositionally biased toward low complexity; the sequence is NNNNNNNNNNNNNNNSNNNNNN. The Protein kinase domain maps to 599-854; the sequence is VKINVEIYDS…EILKVFYSLL (256 aa). Residues 605–613 and Lys626 contribute to the ATP site; that span reads IYDSPLCTV. Asp724 serves as the catalytic Proton acceptor. Disordered stretches follow at residues 937-1241 and 1282-1310; these read SERK…IVNP and SSDS…IRSP. The segment covering 976-986 has biased composition (acidic residues); that stretch reads IIDDDDDDDDD. Composition is skewed to low complexity over residues 1004–1015 and 1024–1062; these read NINSENKNNNNV and SSNS…NNNN. Polar residues-rich tracts occupy residues 1063–1083 and 1118–1127; these read LRQN…NQLM and LSSSQTSEIG. Composition is skewed to low complexity over residues 1128 to 1241 and 1282 to 1291; these read DNNT…IVNP and SSDSSNSLSD.

The protein belongs to the protein kinase superfamily. TKL Ser/Thr protein kinase family.

The enzyme catalyses L-seryl-[protein] + ATP = O-phospho-L-seryl-[protein] + ADP + H(+). The catalysed reaction is L-threonyl-[protein] + ATP = O-phospho-L-threonyl-[protein] + ADP + H(+). In Dictyostelium discoideum (Social amoeba), this protein is Probable serine/threonine-protein kinase DDB_G0288147.